A 317-amino-acid chain; its full sequence is 4-diphosphocytidyl-2-C-methyl-D-erythritol kinase (317 aa).

The active site involves Lys-11. 99–109 provides a ligand contact to ATP; that stretch reads PVAAGLAGGST. Asp-141 is an active-site residue.

The protein belongs to the GHMP kinase family. IspE subfamily.

It catalyses the reaction 4-CDP-2-C-methyl-D-erythritol + ATP = 4-CDP-2-C-methyl-D-erythritol 2-phosphate + ADP + H(+). The protein operates within isoprenoid biosynthesis; isopentenyl diphosphate biosynthesis via DXP pathway; isopentenyl diphosphate from 1-deoxy-D-xylulose 5-phosphate: step 3/6. Functionally, catalyzes the phosphorylation of the position 2 hydroxy group of 4-diphosphocytidyl-2C-methyl-D-erythritol. This Trichormus variabilis (strain ATCC 29413 / PCC 7937) (Anabaena variabilis) protein is 4-diphosphocytidyl-2-C-methyl-D-erythritol kinase.